The chain runs to 356 residues: Protein RecA (356 aa).

68–75 (GQESSGKT) contacts ATP.

It belongs to the RecA family.

Its subcellular location is the cytoplasm. Functionally, can catalyze the hydrolysis of ATP in the presence of single-stranded DNA, the ATP-dependent uptake of single-stranded DNA by duplex DNA, and the ATP-dependent hybridization of homologous single-stranded DNAs. It interacts with LexA causing its activation and leading to its autocatalytic cleavage. This chain is Protein RecA, found in Thermotoga sp. (strain RQ2).